We begin with the raw amino-acid sequence, 248 residues long: Putative insertion sequence ATP-binding protein y4uH (248 aa).

Residue 106–113 (GPTGIGKS) participates in ATP binding.

This sequence belongs to the IS21/IS1162 putative ATP-binding protein family.

This is Putative insertion sequence ATP-binding protein y4uH from Sinorhizobium fredii (strain NBRC 101917 / NGR234).